Here is a 116-residue protein sequence, read N- to C-terminus: UPF0102 protein Neut_1662 (116 aa).

The protein belongs to the UPF0102 family.

The chain is UPF0102 protein Neut_1662 from Nitrosomonas eutropha (strain DSM 101675 / C91 / Nm57).